The following is a 469-amino-acid chain: MNPNQKIITIGSVSLTIATICFLMQIAILVTTVTLHFKQYECDSPANNQVMPCEPIIIERNITEIVYLTNTTIEKEICPKLVEYRNWSKPQCKITGFAPFSKDNSIRLSAGGDIWVTREPYVSCDPGRCYQFALGQGTTLDNKHSNDTIHDRTPHRTLLMNELGVPFHLGTRQVCIAWSSSSCHDGKAWLHVCVTGYDKNATASFIYDGRLVDSIGSWSKNILRTQESECVCINGTCTVVMTDGSASERADTKVLFIEEGKIVHISPLSGSAQHVEECSCYPRYPGVRCVCRDNWKGSNRPVVDINVKDYSIASSYVCSGLVGDTPRKNDRYSSSYCRNPNNEKGNHGVKGWAFDDGNDVWMGRTISDESRSGYETFKVIGGWSTPNSKLQINRQVIVDSDNRSGYSGIFSVEGKSCINRCFYVELIRGREQETRVWWTSNSIVVFCGTSGTYGTGSWPDGADINLMPI.

The Intravirion portion of the chain corresponds to 1-9; that stretch reads MNPNQKIIT. The chain crosses the membrane as a helical span at residues 10–30; the sequence is IGSVSLTIATICFLMQIAILV. Positions 11–33 are involved in apical transport and lipid raft association; the sequence is GSVSLTIATICFLMQIAILVTTV. Residues 31-469 are Virion surface-facing; the sequence is TTVTLHFKQY…DGADINLMPI (439 aa). A hypervariable stalk region region spans residues 36 to 88; the sequence is HFKQYECDSPANNQVMPCEPIIIERNITEIVYLTNTTIEKEICPKLVEYRNWS. Residues Asn-61, Asn-70, and Asn-86 are each glycosylated (N-linked (GlcNAc...) asparagine; by host). The interval 91–469 is head of neuraminidase; sequence QCKITGFAPF…DGADINLMPI (379 aa). Intrachain disulfides connect Cys-92-Cys-417, Cys-124-Cys-129, Cys-183-Cys-230, Cys-232-Cys-237, Cys-278-Cys-291, Cys-280-Cys-289, Cys-318-Cys-337, and Cys-421-Cys-447. Arg-118 provides a ligand contact to substrate. N-linked (GlcNAc...) asparagine; by host glycosylation occurs at Asn-146. Asp-151 (proton donor/acceptor) is an active-site residue. Residue Arg-152 coordinates substrate. N-linked (GlcNAc...) asparagine; by host glycans are attached at residues Asn-200 and Asn-234. 276-277 contributes to the substrate binding site; the sequence is EE. Arg-292 contributes to the substrate binding site. Residues Asp-293, Gly-297, and Asp-324 each coordinate Ca(2+). Residue Arg-371 participates in substrate binding. Asn-402 carries an N-linked (GlcNAc...) asparagine; by host glycan. The active-site Nucleophile is Tyr-406.

Belongs to the glycosyl hydrolase 34 family. In terms of assembly, homotetramer. The cofactor is Ca(2+). In terms of processing, N-glycosylated.

It is found in the virion membrane. The protein resides in the host apical cell membrane. The enzyme catalyses Hydrolysis of alpha-(2-&gt;3)-, alpha-(2-&gt;6)-, alpha-(2-&gt;8)- glycosidic linkages of terminal sialic acid residues in oligosaccharides, glycoproteins, glycolipids, colominic acid and synthetic substrates.. Inhibited by the neuraminidase inhibitors zanamivir (Relenza) and oseltamivir (Tamiflu). These drugs interfere with the release of progeny virus from infected cells and are effective against all influenza strains. Resistance to neuraminidase inhibitors is quite rare. Catalyzes the removal of terminal sialic acid residues from viral and cellular glycoconjugates. Cleaves off the terminal sialic acids on the glycosylated HA during virus budding to facilitate virus release. Additionally helps virus spread through the circulation by further removing sialic acids from the cell surface. These cleavages prevent self-aggregation and ensure the efficient spread of the progeny virus from cell to cell. Otherwise, infection would be limited to one round of replication. Described as a receptor-destroying enzyme because it cleaves a terminal sialic acid from the cellular receptors. May facilitate viral invasion of the upper airways by cleaving the sialic acid moieties on the mucin of the airway epithelial cells. Likely to plays a role in the budding process through its association with lipid rafts during intracellular transport. May additionally display a raft-association independent effect on budding. Plays a role in the determination of host range restriction on replication and virulence. Sialidase activity in late endosome/lysosome traffic seems to enhance virus replication. This chain is Neuraminidase, found in Aves (whales).